The primary structure comprises 350 residues: Protein YIPF3 (350 aa).

The span at 1–10 (MATTAAPAGG) shows a compositional bias: low complexity. The tract at residues 1-51 (MATTAAPAGGARNGAGPEWGGFEENIQGGGSAVIDMENMDDTSGSSFEDMG) is disordered. Position 2 is an N-acetylalanine (Ala-2). Topologically, residues 2 to 148 (ATTAAPAGGA…PIKMVNFPQK (147 aa)) are cytoplasmic. A helical transmembrane segment spans residues 149-169 (IAGELYGPLMLVFTLVAILLH). At 170–187 (GMKTSDTIIREGTLMGTA) the chain is on the lumenal side. Residues 188-208 (IGTCFGYWLGVSSFIYFLAYL) form a helical membrane-spanning segment. The Cytoplasmic portion of the chain corresponds to 209-214 (CNAQIT). A helical membrane pass occupies residues 215 to 237 (MLQMLALLGYGLFGHCIVLFITY). Residues 238–240 (NIH) are Lumenal-facing. A helical transmembrane segment spans residues 241 to 263 (LHALFYLFWLLVGGLSTLRMVAV). At 264–274 (LVSRTVGPTQR) the chain is on the cytoplasmic side. Residues 275–295 (LLLCGTLAALHMLFLLYLHFA) form a helical membrane-spanning segment. The Lumenal segment spans residues 296–350 (YHKVVEGILDTLEGPNIPPIQRVPRDIPAMLPAARLPTTVLNATAKAVAVTLQSH). O-linked (GalNAc...) threonine glycosylation is found at Thr-333 and Thr-334. N-linked (GlcNAc...) asparagine glycosylation occurs at Asn-337. Thr-339 and Thr-346 each carry an O-linked (GalNAc...) threonine glycan.

It belongs to the YIP1 family. Interacts with YIPF4 and YIPF5. Post-translationally, N-glycosylated in the ER (40 kDa form I), then O-glycosylated in the Golgi apparatus (46 kDa form II), the C-terminal lumenal region is later removed in the Golgi apparatus to produce a 36 kDa form III. O-glycosylated with core 1-like and core 2-like glycans. O-glycan heterogeneity at Thr-346: HexNAc (minor), HexHexNAc (major), Hex1HexNAc2 (minor), Hex2HexNAc2 (minor) and dHex1Hex2HexNAc2 (minor). In terms of tissue distribution, expressed by nucleated hematopoietic cells (at protein level).

Its subcellular location is the cell membrane. It localises to the cytoplasm. The protein resides in the golgi apparatus. It is found in the cis-Golgi network membrane. Its function is as follows. Involved in the maintenance of the Golgi structure. May play a role in hematopoiesis. The protein is Protein YIPF3 (YIPF3) of Homo sapiens (Human).